We begin with the raw amino-acid sequence, 337 residues long: GTPase Obg (337 aa).

Residues 1–159 form the Obg domain; the sequence is MQFIDYVKIY…RWVILELKLL (159 aa). The OBG-type G domain maps to 160–331; sequence ADVGLIGLPN…LLHYLSEKVG (172 aa). GTP contacts are provided by residues 166-173, 191-195, 213-216, 283-286, and 312-314; these read GLPNAGKS, FTTLI, DIPG, TKID, and SAV. 2 residues coordinate Mg(2+): Ser173 and Thr193.

This sequence belongs to the TRAFAC class OBG-HflX-like GTPase superfamily. OBG GTPase family. As to quaternary structure, monomer. The cofactor is Mg(2+).

The protein resides in the cytoplasm. Its function is as follows. An essential GTPase which binds GTP, GDP and possibly (p)ppGpp with moderate affinity, with high nucleotide exchange rates and a fairly low GTP hydrolysis rate. Plays a role in control of the cell cycle, stress response, ribosome biogenesis and in those bacteria that undergo differentiation, in morphogenesis control. This chain is GTPase Obg, found in Thermodesulfovibrio yellowstonii (strain ATCC 51303 / DSM 11347 / YP87).